Here is a 698-residue protein sequence, read N- to C-terminus: Endogenous retrovirus group K member 9 Env polyprotein (698 aa).

The tract at residues 1-47 (MNPSEMQRKAPPRRRRHRNRAPLTHKMNKMVTSEEQMKLPSTKKAEP) is disordered. An N-terminal signal peptide occupies residues 1–89 (MNPSEMQRKA…ALMIVSMVVS (89 aa)). Basic residues predominate over residues 10–20 (APPRRRRHRNR). Topologically, residues 90-631 (LPMPAGAAAA…NLNPVTWVKT (542 aa)) are extracellular. Asn100, Asn128, Asn153, Asn273, Asn354, Asn371, and Asn460 each carry an N-linked (GlcNAc...) asparagine glycan. Residues 465–485 (FIFTLIAVIMGLIAVTATAAV) form a fusion peptide region. N-linked (GlcNAc...) asparagine glycosylation is found at Asn506, Asn553, Asn565, and Asn584. A helical transmembrane segment spans residues 632-652 (IGSTTIINLILILVCLFCLLL). Over 653–698 (VCRCTQQLRRDSDHRERAMMTMAVLSKRKGGNVGKSKRDQIVTVSV) the chain is Cytoplasmic.

It belongs to the beta type-B retroviral envelope protein family. HERV class-II K(HML-2) env subfamily. As to quaternary structure, the surface (SU) and transmembrane (TM) proteins form a heterodimer. SU and TM are attached by noncovalent interactions or by a labile interchain disulfide bond. Specific enzymatic cleavages in vivo yield the mature SU and TM proteins.

The protein localises to the cell membrane. It is found in the virion. Its function is as follows. Retroviral envelope proteins mediate receptor recognition and membrane fusion during early infection. Endogenous envelope proteins may have kept, lost or modified their original function during evolution. This endogenous envelope protein has lost its original fusogenic properties. In terms of biological role, SU mediates receptor recognition. TM anchors the envelope heterodimer to the viral membrane through one transmembrane domain. The other hydrophobic domain, called fusion peptide, mediates fusion of the viral membrane with the target cell membrane. The protein is Endogenous retrovirus group K member 9 Env polyprotein (ERVK-9) of Homo sapiens (Human).